Here is a 572-residue protein sequence, read N- to C-terminus: Proline--tRNA ligase (572 aa).

It belongs to the class-II aminoacyl-tRNA synthetase family. ProS type 1 subfamily. In terms of assembly, homodimer.

It is found in the cytoplasm. The catalysed reaction is tRNA(Pro) + L-proline + ATP = L-prolyl-tRNA(Pro) + AMP + diphosphate. Catalyzes the attachment of proline to tRNA(Pro) in a two-step reaction: proline is first activated by ATP to form Pro-AMP and then transferred to the acceptor end of tRNA(Pro). As ProRS can inadvertently accommodate and process non-cognate amino acids such as alanine and cysteine, to avoid such errors it has two additional distinct editing activities against alanine. One activity is designated as 'pretransfer' editing and involves the tRNA(Pro)-independent hydrolysis of activated Ala-AMP. The other activity is designated 'posttransfer' editing and involves deacylation of mischarged Ala-tRNA(Pro). The misacylated Cys-tRNA(Pro) is not edited by ProRS. The polypeptide is Proline--tRNA ligase (Enterobacter sp. (strain 638)).